The chain runs to 464 residues: Colanic acid biosynthesis protein WcaM (464 aa).

Its pathway is slime biogenesis; slime polysaccharide biosynthesis. This is Colanic acid biosynthesis protein WcaM (wcaM) from Shigella flexneri.